A 79-amino-acid polypeptide reads, in one-letter code: Sec-independent protein translocase protein TatA (79 aa).

The chain crosses the membrane as a helical span at residues 1–21 (MGGWSSPSHWLIILLIVVLLF). Basic and acidic residues predominate over residues 49 to 61 (EVAKNTQKIEENK). Residues 49–79 (EVAKNTQKIEENKNTTNNTNADASIDETKKA) are disordered.

Belongs to the TatA/E family. In terms of assembly, the Tat system comprises two distinct complexes: a TatABC complex, containing multiple copies of TatA, TatB and TatC subunits, and a separate TatA complex, containing only TatA subunits. Substrates initially bind to the TatABC complex, which probably triggers association of the separate TatA complex to form the active translocon.

Its subcellular location is the cell inner membrane. Part of the twin-arginine translocation (Tat) system that transports large folded proteins containing a characteristic twin-arginine motif in their signal peptide across membranes. TatA could form the protein-conducting channel of the Tat system. This is Sec-independent protein translocase protein TatA from Campylobacter jejuni subsp. doylei (strain ATCC BAA-1458 / RM4099 / 269.97).